The chain runs to 42 residues: Photosystem I reaction center subunit IX (42 aa).

A helical membrane pass occupies residues 7 to 27 (YLSVAPVLSTLWFGALAGLLI).

The protein belongs to the PsaJ family.

The protein localises to the plastid. It is found in the chloroplast thylakoid membrane. Its function is as follows. May help in the organization of the PsaE and PsaF subunits. This Agrostis stolonifera (Creeping bentgrass) protein is Photosystem I reaction center subunit IX.